The primary structure comprises 338 residues: 1-aminocyclopropane-1-carboxylate deaminase (338 aa).

Residue K51 is modified to N6-(pyridoxal phosphate)lysine. S78 serves as the catalytic Nucleophile.

It belongs to the ACC deaminase/D-cysteine desulfhydrase family. Homotrimer. Requires pyridoxal 5'-phosphate as cofactor.

The enzyme catalyses 1-aminocyclopropane-1-carboxylate + H2O = 2-oxobutanoate + NH4(+). Functionally, catalyzes a cyclopropane ring-opening reaction, the irreversible conversion of 1-aminocyclopropane-1-carboxylate (ACC) to ammonia and alpha-ketobutyrate. Allows growth on ACC as a nitrogen source. The chain is 1-aminocyclopropane-1-carboxylate deaminase from Paraburkholderia phytofirmans (strain DSM 17436 / LMG 22146 / PsJN) (Burkholderia phytofirmans).